A 392-amino-acid polypeptide reads, in one-letter code: Integrin-linked kinase-associated serine/threonine phosphatase 2C (392 aa).

At methionine 1 the chain carries N-acetylmethionine. The disordered stretch occupies residues 1–91; it reads MDLFGDLPEP…PEEEKNGGEE (91 aa). The span at 31-40 shows a compositional bias: low complexity; that stretch reads DLPPTSSTDS. Residues 59–70 are compositionally biased toward polar residues; that stretch reads SGSLATSGSQVV. Residues 72–91 show a composition bias toward basic and acidic residues; the sequence is NEGKGAKRKAPEEEKNGGEE. The PPM-type phosphatase domain occupies 108 to 390; it reads KGYVAERKGE…DNVTVMVVRI (283 aa). Mn(2+)-binding residues include aspartate 152 and glycine 153. An N6-acetyllysine modification is found at lysine 210. Residues aspartate 326 and aspartate 381 each coordinate Mn(2+).

It belongs to the PP2C family. As to quaternary structure, interacts with ILK. Requires Mg(2+) as cofactor. Mn(2+) serves as cofactor. In terms of tissue distribution, widely expressed. Highest expression observed in kidney, liver and muscle.

It is found in the cytoplasm. It catalyses the reaction O-phospho-L-seryl-[protein] + H2O = L-seryl-[protein] + phosphate. The enzyme catalyses O-phospho-L-threonyl-[protein] + H2O = L-threonyl-[protein] + phosphate. In terms of biological role, protein phosphatase that may play a role in regulation of cell cycle progression via dephosphorylation of its substrates whose appropriate phosphorylation states might be crucial for cell proliferation. Selectively associates with integrin linked kinase (ILK), to modulate cell adhesion and growth factor signaling. Inhibits the ILK-GSK3B signaling axis and may play an important role in inhibiting oncogenic transformation. The chain is Integrin-linked kinase-associated serine/threonine phosphatase 2C (Ilkap) from Rattus norvegicus (Rat).